The following is a 337-amino-acid chain: Palmitoyltransferase ZDHHC15 (337 aa).

Residues 1–20 (MRRGWKMALSGGLRCCRRVL) lie on the Cytoplasmic side of the membrane. The chain crosses the membrane as a helical span at residues 21-41 (SWVPVLVIVLVVLWSYYAYVF). Residues 42–56 (ELCLVTVLSPAEKVI) are Lumenal-facing. Residues 57 to 77 (YLILYHAIFVFFAWTYWKSIF) form a helical membrane-spanning segment. Topologically, residues 78 to 172 (TLPQQPNQKF…NNCIGFSNYK (95 aa)) are cytoplasmic. In terms of domain architecture, DHHC spans 129–179 (RFCDRCHLIKPDRCHHCSVCAMCVLKMDHHCPWVNNCIGFSNYKFFLQFLA). Zn(2+)-binding residues include cysteine 131, cysteine 134, histidine 144, cysteine 145, cysteine 148, cysteine 151, and histidine 158. Catalysis depends on cysteine 159, which acts as the S-palmitoyl cysteine intermediate. Cysteine 165 contributes to the Zn(2+) binding site. A helical membrane pass occupies residues 173 to 193 (FFLQFLAYSVLYCLYIATTVF). At 194 to 210 (SYFIKYWRGELPSVRSK) the chain is on the lumenal side. A helical transmembrane segment spans residues 211-234 (FHVLFLLFVACMFFVSLVILFGYH). Topologically, residues 235 to 337 (CWLVSRNKTT…SSSLAVESET (103 aa)) are cytoplasmic. The disordered stretch occupies residues 293–337 (HSFPMRSMNESQNPLLANEEPWEDNEDDSRDYPEGSSSLAVESET). Over residues 312 to 321 (EPWEDNEDDS) the composition is skewed to acidic residues. Residues 327 to 337 (GSSSLAVESET) show a composition bias toward polar residues.

This sequence belongs to the DHHC palmitoyltransferase family. In terms of processing, autopalmitoylated (in vitro). In terms of tissue distribution, expressed mainly in brain.

The protein resides in the golgi apparatus membrane. It is found in the postsynaptic density. It catalyses the reaction L-cysteinyl-[protein] + hexadecanoyl-CoA = S-hexadecanoyl-L-cysteinyl-[protein] + CoA. The catalysed reaction is L-cysteinyl-[protein] + tetradecanoyl-CoA = S-tetradecanoyl-L-cysteinyl-[protein] + CoA. The enzyme catalyses L-cysteinyl-[protein] + octadecanoyl-CoA = S-octadecanoyl-L-cysteinyl-[protein] + CoA. With respect to regulation, inhibited by 2-bromopalmitate. In terms of biological role, palmitoyltransferase that catalyzes the addition of palmitate onto various protein substrates. Has no stringent fatty acid selectivity and in addition to palmitate can also transfer onto target proteins myristate from tetradecanoyl-CoA and stearate from octadecanoyl-CoA. Palmitoylates IGF2R and SORT1, promoting their partitioning to an endosomal membrane subdomain where they can interact with the retromer cargo-selective complex. Thereby, regulates retrograde transport from endosomes to the Golgi apparatus of these lysosomal sorting receptors and plays a role in trafficking of lysosomal proteins. In the nervous system, catalyzes the palmitoylation of DLG4/PSD95 and regulates its synaptic clustering and function in synaptogenesis. Could be involved in the differentiation of dopaminergic neurons and the development of the diencephalon. Could also catalyze the palmitoylation of GAP43. Could also palmitoylate DNAJC5 and regulate its localization to the Golgi membrane. Could also palmitoylate FYN as shown in vitro. May palmitoylate CALHM3 subunit of gustatory voltage-gated ion channels and modulate channel gating and kinetics. This is Palmitoyltransferase ZDHHC15 from Mus musculus (Mouse).